The primary structure comprises 54 residues: Synaptosomal-associated protein 25 (54 aa).

Belongs to the SNAP-25 family. In terms of assembly, part of the SNARE core complex containing SNAP25, VAMP2 and STX1A; this complex binds CPLX1. Found in a complex containing SYT1, SV2B and syntaxin-1. Found in a ternary complex with STX1A and VAMP8. Interacts with HSC70 and with SYT9, forming a complex with DNAJC5. The interaction with SYT9 is inhibited in presence of calcium. Isoform 1 and isoform 2 interact with BLOC1S6. Interacts with CENPF. Interacts with EQTN. Interacts with HGS. Interacts with KCNB1 (via N-terminus); reduces the voltage-dependent potassium channel KCNB1 activity in pancreatic beta cells. Interacts with OTOF. Interacts with RIMS1. Interacts with SNAPIN. Interacts with STXBP6. Interacts with TRIM9. Interacts with ZDHHC13 (via ANK repeats). Interacts with ZDHHC17 (via ANK repeats). Associates with the BLOC-1 complex. Interacts with PLCL1 (via C2 domain). Interacts with PRRT2; this interaction may impair the formation of the SNARE complex. Interacts with alpha-synuclein/SNCA. Interacts with PRPH2. Interacts with ROM1. Interacts with STX3. In terms of processing, the N-terminus is blocked.

It is found in the cytoplasm. The protein localises to the perinuclear region. The protein resides in the cell membrane. Its subcellular location is the synapse. It localises to the synaptosome. It is found in the photoreceptor inner segment. Its function is as follows. t-SNARE involved in the molecular regulation of neurotransmitter release. May play an important role in the synaptic function of specific neuronal systems. Associates with proteins involved in vesicle docking and membrane fusion. Regulates plasma membrane recycling through its interaction with CENPF. Modulates the gating characteristics of the delayed rectifier voltage-dependent potassium channel KCNB1 in pancreatic beta cells. This chain is Synaptosomal-associated protein 25 (SNAP25), found in Oryctolagus cuniculus (Rabbit).